A 293-amino-acid polypeptide reads, in one-letter code: Elongation factor Ts (293 aa).

Residues 80–83 (TDFV) form an involved in Mg(2+) ion dislocation from EF-Tu region.

The protein belongs to the EF-Ts family.

The protein resides in the cytoplasm. Associates with the EF-Tu.GDP complex and induces the exchange of GDP to GTP. It remains bound to the aminoacyl-tRNA.EF-Tu.GTP complex up to the GTP hydrolysis stage on the ribosome. In Paraburkholderia phytofirmans (strain DSM 17436 / LMG 22146 / PsJN) (Burkholderia phytofirmans), this protein is Elongation factor Ts.